Reading from the N-terminus, the 67-residue chain is MMSKLGVLLTICLLLFPLTAVQLDGDQPADLPALRTQDISTDHSPWFDPVKRCCSRYCYICIPCCPN.

The N-terminal stretch at 1–20 (MMSKLGVLLTICLLLFPLTA) is a signal peptide. Positions 21-50 (VQLDGDQPADLPALRTQDISTDHSPWFDPV) are excised as a propeptide. 3 cysteine pairs are disulfide-bonded: Cys-53/Cys-65, Cys-54/Cys-61, and Cys-58/Cys-64. The residue at position 63 (Pro-63) is a 4-hydroxyproline.

Belongs to the conotoxin M superfamily. As to expression, expressed by the venom duct.

It localises to the secreted. In Conus tessulatus (Tessellate cone), this protein is Conotoxin TsMMSK-011.